A 62-amino-acid polypeptide reads, in one-letter code: Small EDRK-rich factor 1 (62 aa).

Composition is skewed to basic and acidic residues over residues 1–30 (MARG…KEDS) and 50–62 (AANE…TREK). Residues 1-62 (MARGNQRELA…ERKSMQTREK (62 aa)) are disordered.

This sequence belongs to the SERF family. As to quaternary structure, interacts with SNCA; this interaction promotes the aggregation of SNCA.

It localises to the cytoplasm. The protein resides in the cytosol. It is found in the nucleus. In terms of biological role, positive regulator of amyloid protein aggregation and proteotoxicity. Induces conformational changes in amyloid proteins, such as APP, HTT, and SNCA, driving them into compact formations preceding the formation of aggregates. The chain is Small EDRK-rich factor 1 (SERF1) from Bos taurus (Bovine).